A 288-amino-acid chain; its full sequence is 33 kDa chaperonin (288 aa).

Intrachain disulfides connect cysteine 236–cysteine 238 and cysteine 269–cysteine 272.

Belongs to the HSP33 family. In terms of processing, under oxidizing conditions two disulfide bonds are formed involving the reactive cysteines. Under reducing conditions zinc is bound to the reactive cysteines and the protein is inactive.

It localises to the cytoplasm. Functionally, redox regulated molecular chaperone. Protects both thermally unfolding and oxidatively damaged proteins from irreversible aggregation. Plays an important role in the bacterial defense system toward oxidative stress. The chain is 33 kDa chaperonin from Lactococcus lactis subsp. cremoris (strain MG1363).